The chain runs to 406 residues: GTPase Obg (406 aa).

The Obg domain maps to 1 to 159 (MKFVDEVSIH…RDLKLELKVL (159 aa)). The disordered stretch occupies residues 127 to 148 (NTRFKSSTNRAPRQTTPGKPGE). The span at 129–143 (RFKSSTNRAPRQTTP) shows a compositional bias: polar residues. In terms of domain architecture, OBG-type G spans 160 to 334 (ADVGLLGLPN…LSQDIMRYLD (175 aa)). Residues 166 to 173 (GLPNAGKS), 191 to 195 (FTTLV), 213 to 216 (DIPG), 283 to 286 (NKMD), and 315 to 317 (SAL) contribute to the GTP site. Residues S173 and T193 each coordinate Mg(2+). Residues 382–406 (AGAVDDDDFDDEEDDGDGPEIFYVP) are disordered. The segment covering 385-399 (VDDDDFDDEEDDGDG) has biased composition (acidic residues).

Belongs to the TRAFAC class OBG-HflX-like GTPase superfamily. OBG GTPase family. In terms of assembly, monomer. The cofactor is Mg(2+).

It localises to the cytoplasm. In terms of biological role, an essential GTPase which binds GTP, GDP and possibly (p)ppGpp with moderate affinity, with high nucleotide exchange rates and a fairly low GTP hydrolysis rate. Plays a role in control of the cell cycle, stress response, ribosome biogenesis and in those bacteria that undergo differentiation, in morphogenesis control. The sequence is that of GTPase Obg from Pseudomonas aeruginosa (strain LESB58).